The primary structure comprises 221 residues: ATP-dependent dethiobiotin synthetase BioD (221 aa).

11 to 16 contacts ATP; the sequence is GVGKTY. Thr-15 contacts Mg(2+). Lys-36 is an active-site residue. Position 40 (Thr-40) interacts with substrate. Residues Asp-48 and 107–110 contribute to the ATP site; that span reads EGAG. Mg(2+)-binding residues include Asp-48 and Glu-107.

Belongs to the dethiobiotin synthetase family. As to quaternary structure, homodimer. The cofactor is Mg(2+).

Its subcellular location is the cytoplasm. It carries out the reaction (7R,8S)-7,8-diammoniononanoate + CO2 + ATP = (4R,5S)-dethiobiotin + ADP + phosphate + 3 H(+). It participates in cofactor biosynthesis; biotin biosynthesis; biotin from 7,8-diaminononanoate: step 1/2. In terms of biological role, catalyzes a mechanistically unusual reaction, the ATP-dependent insertion of CO2 between the N7 and N8 nitrogen atoms of 7,8-diaminopelargonic acid (DAPA, also called 7,8-diammoniononanoate) to form a ureido ring. The polypeptide is ATP-dependent dethiobiotin synthetase BioD (Hydrogenobaculum sp. (strain Y04AAS1)).